A 104-amino-acid polypeptide reads, in one-letter code: MAIIPDKQDSTVLERKQQKLKPPSMYKVVLLNDDFTPMEFVVMVVQEYFKKDRETATQIMLKVHREGRGVCGVYTRDIASTKVEQVVTHARQAGHPLQCVMEEA.

This sequence belongs to the ClpS family. As to quaternary structure, binds to the N-terminal domain of the chaperone ClpA.

In terms of biological role, involved in the modulation of the specificity of the ClpAP-mediated ATP-dependent protein degradation. This Burkholderia ambifaria (strain MC40-6) protein is ATP-dependent Clp protease adapter protein ClpS.